An 806-amino-acid chain; its full sequence is Sucrose synthase (806 aa).

Residues 275–752 are GT-B glycosyltransferase; sequence MVFNVVILSP…GLQRIEEKYT (478 aa).

The protein belongs to the glycosyltransferase 1 family. Plant sucrose synthase subfamily.

The enzyme catalyses an NDP-alpha-D-glucose + D-fructose = a ribonucleoside 5'-diphosphate + sucrose + H(+). Its function is as follows. Sucrose-cleaving enzyme that provides UDP-glucose and fructose for various metabolic pathways. This Vicia faba (Broad bean) protein is Sucrose synthase (SUCS).